The primary structure comprises 230 residues: Uracil-DNA glycosylase (230 aa).

Residue D70 is the Proton acceptor of the active site.

Belongs to the uracil-DNA glycosylase (UDG) superfamily. UNG family.

The protein resides in the cytoplasm. It catalyses the reaction Hydrolyzes single-stranded DNA or mismatched double-stranded DNA and polynucleotides, releasing free uracil.. Its function is as follows. Excises uracil residues from the DNA which can arise as a result of misincorporation of dUMP residues by DNA polymerase or due to deamination of cytosine. The protein is Uracil-DNA glycosylase of Pseudomonas putida (strain GB-1).